The primary structure comprises 399 residues: Elongation factor Tu (399 aa).

The tr-type G domain maps to Lys-10–Glu-204. The tract at residues Gly-19–Thr-26 is G1. Gly-19–Thr-26 is a GTP binding site. Thr-26 serves as a coordination point for Mg(2+). Positions Gly-60–Asn-64 are G2. A G3 region spans residues Asp-81–Gly-84. GTP contacts are provided by residues Asp-81–His-85 and Asn-136–Asp-139. Positions Asn-136–Asp-139 are G4. The tract at residues Ser-174–Leu-176 is G5.

Belongs to the TRAFAC class translation factor GTPase superfamily. Classic translation factor GTPase family. EF-Tu/EF-1A subfamily. In terms of assembly, monomer.

Its subcellular location is the cytoplasm. The catalysed reaction is GTP + H2O = GDP + phosphate + H(+). GTP hydrolase that promotes the GTP-dependent binding of aminoacyl-tRNA to the A-site of ribosomes during protein biosynthesis. This is Elongation factor Tu from Prochlorococcus marinus (strain MIT 9515).